The chain runs to 137 residues: SPbeta prophage-derived uncharacterized protein YoqU (137 aa).

This Bacillus subtilis (strain 168) protein is SPbeta prophage-derived uncharacterized protein YoqU (yoqU).